The sequence spans 138 residues: Ribulose bisphosphate carboxylase small subunit (138 aa).

It belongs to the RuBisCO small chain family. In terms of assembly, heterohexadecamer of 8 large and 8 small subunits.

The protein resides in the plastid. Its subcellular location is the chloroplast. In terms of biological role, ruBisCO catalyzes two reactions: the carboxylation of D-ribulose 1,5-bisphosphate, the primary event in carbon dioxide fixation, as well as the oxidative fragmentation of the pentose substrate in the photorespiration process. Both reactions occur simultaneously and in competition at the same active site. Although the small subunit is not catalytic it is essential for maximal activity. The sequence is that of Ribulose bisphosphate carboxylase small subunit from Antithamnion sp. (Red alga).